The chain runs to 472 residues: MGHQSSWMKQTVIDSVVQSSKVGVFSMFSMDYKAPRKYSHGRNFGVARQQDFAADIVTRRPYAPYDNGMKKGPNKLSRNLVWTSKEYKSPEGNRPRQNAANGSAKPQVIGTGHRVSNQPRKNAVYGPRSSSLSDTRGCGPRLNGSPKKSVCNFWKDGNCKKGEKCQFLHSWSCFPGLAMVAALEGHKNDIKGIALPQGSDKLFSVSGDGTLLIWDCNSGQCVRSINLQAEAGSLISEGPWVFLGLPNAVKAFNVQNSKDVHLEGVVGQVHAMTAANGMLFAGTSSGSILVWKATDSESDPFKYLTSLEGHHSGEVTCFVVGGEVLYSGSVDKTIKVWDLNTLQCRMTLKQHIGTVTSLLCWDKCLISSSLDGTIKLWACSENESLKVVQTRKQELSVHTLCGMHDAEAKPIMFCSYQNGAVGIFDLPSFEERGKMFSTQTICTLTIGPGGLLFSGDKSGNLRVWSLASGTKV.

Positions Y87–G139 are disordered. A C3H1-type zinc finger spans residues S145 to S172. 5 WD repeats span residues G185–N226, H261–F301, H310–T347, Q350–V387, and F436–V472.

This is Zinc finger CCCH domain-containing protein 59 (ZFWD3) from Arabidopsis thaliana (Mouse-ear cress).